The chain runs to 418 residues: Tryptophan synthase beta chain (418 aa).

Lysine 109 bears the N6-(pyridoxal phosphate)lysine mark.

It belongs to the TrpB family. As to quaternary structure, tetramer of two alpha and two beta chains. Requires pyridoxal 5'-phosphate as cofactor.

It carries out the reaction (1S,2R)-1-C-(indol-3-yl)glycerol 3-phosphate + L-serine = D-glyceraldehyde 3-phosphate + L-tryptophan + H2O. It functions in the pathway amino-acid biosynthesis; L-tryptophan biosynthesis; L-tryptophan from chorismate: step 5/5. In terms of biological role, the beta subunit is responsible for the synthesis of L-tryptophan from indole and L-serine. This Thermus thermophilus (strain ATCC 27634 / DSM 579 / HB8) protein is Tryptophan synthase beta chain.